The following is a 289-amino-acid chain: Probable phosphoribulokinase (289 aa).

Residue 12–20 (GSSGAGTTT) participates in ATP binding.

Belongs to the phosphoribulokinase family.

The enzyme catalyses D-ribulose 5-phosphate + ATP = D-ribulose 1,5-bisphosphate + ADP + H(+). The polypeptide is Probable phosphoribulokinase (prkB) (Escherichia coli (strain K12)).